The sequence spans 163 residues: MVTAIYPGTFDPLTRGHEDLVRRASGLFDKLIVGVADSKNKKPFFSLEERLTISNEVLGHYPNVHVESFSGLLKDFVRRHDARVIVRGLRAVSDFEYEFQMAGMNRYLLPDVETLFLTPSDQYQFISGTIVREIAALGGDVSKFVFPSVDKWLKEKIAAQEQG.

T9 is a substrate binding site. ATP is bound by residues 9 to 10 (TF) and H17. Substrate-binding residues include K41, L73, and R87. ATP contacts are provided by residues 88–90 (GLR), E98, and 123–129 (YQFISGT).

Belongs to the bacterial CoaD family. Homohexamer. It depends on Mg(2+) as a cofactor.

The protein resides in the cytoplasm. It catalyses the reaction (R)-4'-phosphopantetheine + ATP + H(+) = 3'-dephospho-CoA + diphosphate. The protein operates within cofactor biosynthesis; coenzyme A biosynthesis; CoA from (R)-pantothenate: step 4/5. In terms of biological role, reversibly transfers an adenylyl group from ATP to 4'-phosphopantetheine, yielding dephospho-CoA (dPCoA) and pyrophosphate. This is Phosphopantetheine adenylyltransferase from Herminiimonas arsenicoxydans.